The following is a 536-amino-acid chain: Glyco-Gag protein (536 aa).

Residues 1 to 54 lie on the Cytoplasmic side of the membrane; that stretch reads MSGASSGTATGARLFGISSVLGEYRVLIGDEGAGPSRSPSEVSFSVWYRSRAAR. A helical membrane pass occupies residues 55-75; sequence LVILCLVASFLVPCLTFLIAE. Residues 76–536 lie on the Extracellular side of the membrane; that stretch reads TVMGQTVTTP…TQNRNKDREE (461 aa). A glycan (N-linked (GlcNAc...) asparagine; by host) is linked at Asn137. Disordered stretches follow at residues 174–284 and 494–536; these read VRPF…NNRP and ETPE…DREE. The segment covering 177-198 has biased composition (pro residues); it reads FLPPPKPPTPLPQPLSPQPSAP. The span at 199 to 209 shows a compositional bias: low complexity; the sequence is PTSSLYPVLPK. Composition is skewed to pro residues over residues 210-223 and 233-246; these read TNPP…PDPS and EPPP…PPPS. Positions 494-511 are enriched in basic and acidic residues; sequence ETPEEREERLWQRQEERD.

Glycosylated by host. In terms of processing, cleaved by host near the middle of the molecule, releasing the c-terminal half containing capsid and nucleoprotein domains op GAG.

It is found in the host cell membrane. Its function is as follows. Plays a role in viral particle release. Presumably acts by facilitating the fission of the virion bud at the cell surface. In Feline sarcoma virus (strain McDonough), this protein is Glyco-Gag protein.